A 152-amino-acid polypeptide reads, in one-letter code: Putative RRN3-like protein RRN3P1 (152 aa).

Belongs to the RRN3 family.

The chain is Putative RRN3-like protein RRN3P1 (RRN3P1) from Homo sapiens (Human).